The primary structure comprises 297 residues: Homoserine kinase (297 aa).

An ATP-binding site is contributed by 82 to 92; that stretch reads PLTRGLGSSAS.

This sequence belongs to the GHMP kinase family. Homoserine kinase subfamily.

The protein localises to the cytoplasm. The enzyme catalyses L-homoserine + ATP = O-phospho-L-homoserine + ADP + H(+). It functions in the pathway amino-acid biosynthesis; L-threonine biosynthesis; L-threonine from L-aspartate: step 4/5. Its function is as follows. Catalyzes the ATP-dependent phosphorylation of L-homoserine to L-homoserine phosphate. This Bacillus cereus (strain ATCC 10987 / NRS 248) protein is Homoserine kinase.